The primary structure comprises 291 residues: Protease HtpX (291 aa).

Helical transmembrane passes span 4–24 (VLLF…VLSV) and 37–57 (GGLL…SLLM). Histidine 143 is a binding site for Zn(2+). Glutamate 144 is an active-site residue. Zn(2+) is bound at residue histidine 147. 2 helical membrane-spanning segments follow: residues 158 to 178 (LIQG…AGIV) and 198 to 218 (FAIS…IVMW). Glutamate 224 contacts Zn(2+).

This sequence belongs to the peptidase M48B family. It depends on Zn(2+) as a cofactor.

It localises to the cell inner membrane. In Tolumonas auensis (strain DSM 9187 / NBRC 110442 / TA 4), this protein is Protease HtpX.